A 500-amino-acid polypeptide reads, in one-letter code: L-arabinose isomerase (500 aa).

The Mn(2+) site is built by glutamate 306, glutamate 333, histidine 350, and histidine 450.

This sequence belongs to the arabinose isomerase family. As to quaternary structure, homohexamer. Mn(2+) serves as cofactor.

The catalysed reaction is beta-L-arabinopyranose = L-ribulose. It participates in carbohydrate degradation; L-arabinose degradation via L-ribulose; D-xylulose 5-phosphate from L-arabinose (bacterial route): step 1/3. Catalyzes the conversion of L-arabinose to L-ribulose. This chain is L-arabinose isomerase, found in Escherichia coli O6:H1 (strain CFT073 / ATCC 700928 / UPEC).